The primary structure comprises 162 residues: Regulator of sigma D (162 aa).

It belongs to the Rsd/AlgQ family. Interacts with RpoD.

It is found in the cytoplasm. Functionally, binds RpoD and negatively regulates RpoD-mediated transcription activation by preventing the interaction between the primary sigma factor RpoD with the catalytic core of the RNA polymerase and with promoter DNA. May be involved in replacement of the RNA polymerase sigma subunit from RpoD to RpoS during the transition from exponential growth to the stationary phase. The protein is Regulator of sigma D of Salmonella typhi.